Reading from the N-terminus, the 459-residue chain is Serine permease SerP1 (459 aa).

12 consecutive transmembrane segments (helical) span residues 19 to 39, 42 to 62, 97 to 117, 119 to 139, 153 to 173, 212 to 232, 254 to 274, 281 to 301, 341 to 361, 370 to 390, 412 to 432, and 436 to 456; these read IQLI…AGKT, MTGP…FFFL, SYWL…GTYI, FWLP…LLFG, FWFA…AIIL, FVGA…IGMT, ILLF…WHYI, FVIV…NFVV, AGIP…APVL, AFNF…FITL, PTIA…SLFF, and TFYP…YSHF.

Belongs to the amino acid-polyamine-organocation (APC) superfamily. Amino acid transporter (AAT) (TC 2.A.3.1) family.

The protein localises to the cell membrane. Its function is as follows. Transports L-serine, L-threonine and L-cysteine with high affinity. Stereoselective, with a strong preference for L-serine. Is the main L-serine transporter and is responsible for optimal growth in media containing free amino acids as the sole source of amino acids. Is also the main transporter for L-threonine. The sequence is that of Serine permease SerP1 from Lactococcus lactis subsp. cremoris (strain MG1363).